The following is a 258-amino-acid chain: E3 ubiquitin-protein ligase RNF170 (258 aa).

At Met-1 to Asp-24 the chain is on the lumenal side. A helical transmembrane segment spans residues Gln-25–Phe-45. Residues Arg-46–Arg-201 are Cytoplasmic-facing. The RING-type zinc-finger motif lies at Cys-87–Arg-130. The chain crosses the membrane as a helical span at residues Ile-202–Glu-222. Ala-223 is a topological domain (lumenal). Residues Leu-224–Ile-244 traverse the membrane as a helical segment. The Cytoplasmic portion of the chain corresponds to Ser-245–Arg-258.

(Microbial infection) Interacts with human cytomegalovirus protein NEC2/UL50; this interaction promotes of UBA7 ubiquitination and subsequent proteasomal degradation. In terms of assembly, constitutively associated with the ERLIN1/ERLIN 2 complex. Interacts with activated ITPR1. In terms of tissue distribution, expressed in the spinal cord.

The protein resides in the endoplasmic reticulum membrane. It catalyses the reaction S-ubiquitinyl-[E2 ubiquitin-conjugating enzyme]-L-cysteine + [acceptor protein]-L-lysine = [E2 ubiquitin-conjugating enzyme]-L-cysteine + N(6)-ubiquitinyl-[acceptor protein]-L-lysine.. Its pathway is protein modification; protein ubiquitination. E3 ubiquitin-protein ligase that plays an essential role in stimulus-induced inositol 1,4,5-trisphosphate receptor type 1 (ITPR1) ubiquitination and degradation via the endoplasmic reticulum-associated degradation (ERAD) pathway. Also involved in ITPR1 turnover in resting cells. Selectively inhibits the TLR3-triggered innate immune response by promoting the 'Lys-48'-linked polyubiquitination and degradation of TLR3. The polypeptide is E3 ubiquitin-protein ligase RNF170 (RNF170) (Homo sapiens (Human)).